Consider the following 816-residue polypeptide: Larval serum protein 1 alpha chain (816 aa).

The signal sequence occupies residues 1 to 16; that stretch reads MKFAIAFLACVAVVTA.

The protein belongs to the hemocyanin family. Heterohexamer, composed of three subunits, alpha, beta and gamma. Larval hemolymph.

The protein resides in the secreted. It localises to the extracellular space. In terms of biological role, larval storage protein (LSP) which may serve as a store of amino acids for synthesis of adult proteins. The chain is Larval serum protein 1 alpha chain (Lsp1alpha) from Drosophila melanogaster (Fruit fly).